The primary structure comprises 103 residues: Phosphoribosyl-ATP pyrophosphatase (103 aa).

The disordered stretch occupies residues 79–103 (SVQAELERREGKLSTTRDRKEIDEL). A compositionally biased stretch (basic and acidic residues) spans 83 to 103 (ELERREGKLSTTRDRKEIDEL).

This sequence belongs to the PRA-PH family.

It localises to the cytoplasm. It carries out the reaction 1-(5-phospho-beta-D-ribosyl)-ATP + H2O = 1-(5-phospho-beta-D-ribosyl)-5'-AMP + diphosphate + H(+). It participates in amino-acid biosynthesis; L-histidine biosynthesis; L-histidine from 5-phospho-alpha-D-ribose 1-diphosphate: step 2/9. This Listeria welshimeri serovar 6b (strain ATCC 35897 / DSM 20650 / CCUG 15529 / CIP 8149 / NCTC 11857 / SLCC 5334 / V8) protein is Phosphoribosyl-ATP pyrophosphatase.